The primary structure comprises 145 residues: Putative pre-16S rRNA nuclease (145 aa).

It belongs to the YqgF nuclease family.

It is found in the cytoplasm. Could be a nuclease involved in processing of the 5'-end of pre-16S rRNA. In Sulfurihydrogenibium sp. (strain YO3AOP1), this protein is Putative pre-16S rRNA nuclease.